The following is a 74-amino-acid chain: Cytoplasmic envelopment protein 3 (74 aa).

G2 carries N-myristoyl glycine; by host lipidation. Residues 15–16 carry the Di-leucine-like internalization motif motif; sequence LV. The interval 34-40 is asp/Glu-rich (acidic); sequence SMEEFDI. The interval 36–74 is disordered; it reads EEFDIPPPPPLPKPVFKQPGPYKIPARSQRCPSKRRDPY.

Belongs to the herpesviridae cytoplasmic envelopment protein 3 family. In terms of assembly, interacts with cytoplasmic envelopment protein 2; this interaction is essential for the proper localization of each protein to the assembly complex and thus for the production of infectious virus. Post-translationally, myristoylation and palmitoylation (probably on one or more of the nearby cysteines at the N-terminus) enable membrane-binding and Golgi apparatus-specific targeting and are essential for efficient packaging. In terms of processing, phosphorylated. Phosphorylation does not seem to be required for recycling to the host Golgi apparatus. Packaging is selective for underphosphorylated forms.

It is found in the virion tegument. It localises to the virion membrane. The protein localises to the host cell membrane. The protein resides in the host Golgi apparatus membrane. In terms of biological role, plays an important role in the cytoplasmic envelopment of tegument proteins and capsids during the assembly and egress processes. Also participates in viral entry at the fusion step probably by regulating the core fusion machinery. The sequence is that of Cytoplasmic envelopment protein 3 from Equine herpesvirus 1 (strain Ab4p) (EHV-1).